Consider the following 406-residue polypeptide: Cytochrome P450 165C4 (406 aa).

Cys-356 is a heme binding site.

The protein belongs to the cytochrome P450 family. Heme is required as a cofactor.

Its pathway is antibiotic biosynthesis; vancomycin biosynthesis. Functionally, involved in the coupling of aromatic side chains of the heptapeptide of vancomycin. This chain is Cytochrome P450 165C4 (cyp165C4), found in Amycolatopsis orientalis (Nocardia orientalis).